Here is a 301-residue protein sequence, read N- to C-terminus: Probable alpha-L-glutamate ligase 1 (301 aa).

The ATP-grasp domain maps to 104 to 287 (MQLMSRRGIG…VAGAIIEFVE (184 aa)). ATP is bound by residues Lys-141, 178-179 (EY), Asp-187, and 211-213 (RSN). Positions 248, 260, and 262 each coordinate Mg(2+). Positions 248, 260, and 262 each coordinate Mn(2+).

The protein belongs to the RimK family. The cofactor is Mg(2+). Mn(2+) serves as cofactor.

This is Probable alpha-L-glutamate ligase 1 from Shewanella putrefaciens (strain CN-32 / ATCC BAA-453).